The following is a 479-amino-acid chain: Dihydrolipoyl dehydrogenase, mitochondrial (479 aa).

The N-terminal 19 residues, 1-19, are a transit peptide targeting the mitochondrion; sequence FNRXSPGLQGVSSVPLRTY. Lys50 carries the post-translational modification N6-acetyllysine; alternate. Lys50 is subject to N6-succinyllysine; alternate. FAD contacts are provided by residues 55 to 64 and Lys73; that span reads EKNETLGGTC. Cys64 and Cys69 are disulfide-bonded. 4 positions are modified to N6-acetyllysine; alternate: Lys88, Lys106, Lys116, and Lys127. An N6-succinyllysine; alternate mark is found at Lys88, Lys106, Lys116, and Lys127. Gly138 is an FAD binding site. Residues Lys143 and Lys150 each carry the N6-succinyllysine modification. Position 167–169 (167–169) interacts with FAD; that stretch reads TGS. Residues 204-211 and Glu227 each bind NAD(+); that span reads GAGVIGVE. 2 positions are modified to N6-succinyllysine: Lys257 and Lys261. Val262 contributes to the NAD(+) binding site. Phosphoserine is present on Ser269. Residue Gly298 participates in NAD(+) binding. Position 330 is an N6-acetyllysine (Lys330). FAD-binding positions include Asp339 and 345–348; that span reads MLAH. An N6-acetyllysine; alternate modification is found at Lys394. Residue Lys394 is modified to N6-succinyllysine; alternate. 2 positions are modified to N6-acetyllysine: Lys401 and Lys404. Lys414 carries the N6-succinyllysine modification. His471 acts as the Proton acceptor in catalysis.

Belongs to the class-I pyridine nucleotide-disulfide oxidoreductase family. In terms of assembly, homodimer. Part of the multimeric pyruvate dehydrogenase complex that contains multiple copies of pyruvate dehydrogenase (subunits PDHA (PDHA1 or PDHA2) and PDHB, E1), dihydrolipoamide acetyltransferase (DLAT, E2) and lipoamide dehydrogenase (DLD, E3). These subunits are bound to an inner core composed of about 48 DLAT and 12 PDHX molecules (by non covalent bonds). The 2-oxoglutarate dehydrogenase complex is composed of OGDH (2-oxoglutarate dehydrogenase; E1), DLST (dihydrolipoamide succinyltransferase; E2) and DLD (dihydrolipoamide dehydrogenase; E3). It contains multiple copies of the three enzymatic components (E1, E2 and E3). In the nucleus, the 2-oxoglutarate dehydrogenase complex associates with KAT2A. Interacts with PDHX. The cofactor is FAD. In terms of processing, tyrosine phosphorylated. As to expression, expressed in testis (at protein level).

It is found in the mitochondrion matrix. The protein localises to the nucleus. Its subcellular location is the cell projection. The protein resides in the cilium. It localises to the flagellum. It is found in the cytoplasmic vesicle. The protein localises to the secretory vesicle. Its subcellular location is the acrosome. The enzyme catalyses N(6)-[(R)-dihydrolipoyl]-L-lysyl-[protein] + NAD(+) = N(6)-[(R)-lipoyl]-L-lysyl-[protein] + NADH + H(+). Lipoamide dehydrogenase is a component of the glycine cleavage system as well as an E3 component of three alpha-ketoacid dehydrogenase complexes (pyruvate-, alpha-ketoglutarate-, and branched-chain amino acid-dehydrogenase complex). The 2-oxoglutarate dehydrogenase complex is mainly active in the mitochondrion. A fraction of the 2-oxoglutarate dehydrogenase complex also localizes in the nucleus and is required for lysine succinylation of histones: associates with KAT2A on chromatin and provides succinyl-CoA to histone succinyltransferase KAT2A. In monomeric form may have additional moonlighting function as serine protease. Involved in the hyperactivation of spermatazoa during capacitation and in the spermatazoal acrosome reaction. In Mesocricetus auratus (Golden hamster), this protein is Dihydrolipoyl dehydrogenase, mitochondrial (DLD).